The following is a 372-amino-acid chain: DNA-directed RNA polymerase subunit alpha (372 aa).

Positions 1-268 are alpha N-terminal domain (alpha-NTD); sequence MIFDEDSNSI…DQFQPFINFD (268 aa). The segment at 280-372 is alpha C-terminal domain (alpha-CTD); it reads KDTLPYDSNL…ESLSKQYSEE (93 aa).

Belongs to the RNA polymerase alpha chain family. As to quaternary structure, homodimer. The RNAP catalytic core consists of 2 alpha, 1 beta, 1 beta' and 1 omega subunit. When a sigma factor is associated with the core the holoenzyme is formed, which can initiate transcription.

It carries out the reaction RNA(n) + a ribonucleoside 5'-triphosphate = RNA(n+1) + diphosphate. Functionally, DNA-dependent RNA polymerase catalyzes the transcription of DNA into RNA using the four ribonucleoside triphosphates as substrates. The chain is DNA-directed RNA polymerase subunit alpha from Ehrlichia chaffeensis (strain ATCC CRL-10679 / Arkansas).